A 472-amino-acid chain; its full sequence is H(+)/Cl(-) exchange transporter ClcA (472 aa).

The Cytoplasmic portion of the chain corresponds to 1 to 32 (MKAETPSFEAHQFVRVRRGDAVRRLIQRDKTP). A helical membrane pass occupies residues 33–69 (LAVLLMAAVVGTLAGLVGVAFEKSVNWVQNQRIGALA). Residues 70–76 (QVADHWY) lie on the Periplasmic side of the membrane. The chain crosses the membrane as a helical span at residues 77-100 (LVWPLAFILSALLAMVGYFLVRRF). The short motif at 106–110 (GSGIP) is the Selectivity filter part_1 element. Ser-107 is a binding site for chloride. The helical intramembrane region spans 109-116 (IPEIEGAL). Over 117–123 (EELRPVR) the chain is Cytoplasmic. 2 consecutive transmembrane segments (helical) span residues 124–141 (WWRVLPVKFIGGMGTLGA) and 148–166 (EGPMVQLGGNIGRMVLDIF). A Selectivity filter part_2 motif is present at residues 146–150 (GREGP). Topologically, residues 167–176 (RMRSPEARHT) are cytoplasmic. 2 intramembrane regions (helical) span residues 177 to 189 (LLATGAASGLSAA) and 193 to 201 (PLAGILFII). The Cytoplasmic portion of the chain corresponds to 202–214 (EEMRPQFRYNLIS). The helical transmembrane segment at 215–232 (IKAVFTGVIMSSIVFRIF) threads the bilayer. Over 233-252 (NGEAAIIEVGKLSNAPVNTL) the chain is Periplasmic. The helical transmembrane segment at 253-281 (WLYLVLGMLFGCFGPLFNFLVLRTQDIFQ) threads the bilayer. Over 282-287 (RIHGGN) the chain is Cytoplasmic. A helical transmembrane segment spans residues 288–309 (IKTWVLMGGVIGGICGLLGLMQ). Residues 310–329 (PSAVGGGFNLIPIAAAGNFS) are Periplasmic-facing. Transmembrane regions (helical) follow at residues 330–349 (VGLLLFIFIARVVTTLICFS) and 355–376 (GIFAPMLALGTLLGTAFGMAAI). Positions 355 to 359 (GIFAP) match the Selectivity filter part_3 motif. Chloride-binding residues include Ile-356 and Phe-357. The Periplasmic portion of the chain corresponds to 377–386 (PLFPAYHLDA). An intramembrane region (helical) is located at residues 387 to 401 (GTFAIAGMGALLAAS). The note=Loop between two helices intramembrane region spans 402–404 (VRA). The segment at residues 405–416 (PLTGIVLVLEMT) is an intramembrane region (helical). The segment at residues 417–421 (DNYQL) is an intramembrane region (note=Loop between two helices). Residues 422–438 (ILPMIITCLGATLLAQF) form a helical membrane-spanning segment. Residues 439-472 (LGGKPLYSTILQRTLAKQEAEQAAKAQQAPRENT) are Cytoplasmic-facing. Tyr-445 is a chloride binding site.

This sequence belongs to the chloride channel (TC 2.A.49) family. ClcA subfamily. Homodimer.

It is found in the cell inner membrane. It carries out the reaction 2 chloride(in) + H(+)(out) = 2 chloride(out) + H(+)(in). In terms of biological role, proton-coupled chloride transporter. Functions as antiport system and exchanges two chloride ions for 1 proton. Probably acts as an electrical shunt for an outwardly-directed proton pump that is linked to amino acid decarboxylation, as part of the extreme acid resistance (XAR) response. This is H(+)/Cl(-) exchange transporter ClcA from Klebsiella pneumoniae (strain 342).